A 430-amino-acid polypeptide reads, in one-letter code: Enolase (430 aa).

Glutamine 163 is a binding site for (2R)-2-phosphoglycerate. Glutamate 205 serves as the catalytic Proton donor. Residues aspartate 242, glutamate 285, and aspartate 312 each coordinate Mg(2+). The (2R)-2-phosphoglycerate site is built by lysine 337, arginine 366, serine 367, and lysine 388. Residue lysine 337 is the Proton acceptor of the active site.

The protein belongs to the enolase family. It depends on Mg(2+) as a cofactor.

It is found in the cytoplasm. The protein localises to the secreted. It localises to the cell surface. It carries out the reaction (2R)-2-phosphoglycerate = phosphoenolpyruvate + H2O. Its pathway is carbohydrate degradation; glycolysis; pyruvate from D-glyceraldehyde 3-phosphate: step 4/5. Functionally, catalyzes the reversible conversion of 2-phosphoglycerate (2-PG) into phosphoenolpyruvate (PEP). It is essential for the degradation of carbohydrates via glycolysis. This Bifidobacterium animalis subsp. lactis (strain AD011) protein is Enolase.